The primary structure comprises 57 residues: Large ribosomal subunit protein bL32 (57 aa).

Residues 1-38 (MAVQQNKPTRSKRGMRRSHDALTAVTSLSVDKTSGEKH) are disordered.

It belongs to the bacterial ribosomal protein bL32 family.

In Escherichia coli O7:K1 (strain IAI39 / ExPEC), this protein is Large ribosomal subunit protein bL32.